We begin with the raw amino-acid sequence, 422 residues long: Protein MANNAN SYNTHESIS-RELATED 1 (422 aa).

Over 1 to 6 (MGVDLR) the chain is Cytoplasmic. The chain crosses the membrane as a helical; Signal-anchor for type II membrane protein span at residues 7 to 26 (QVVAGILTITMFVMLGQMLH). The Lumenal portion of the chain corresponds to 27-422 (RDYFDSLQEK…KNHLAYSCFC (396 aa)). 263–265 (DLR) contributes to the substrate binding site.

The protein belongs to the glycosyltransferase GT106 family. In terms of tissue distribution, widely expressed.

Its subcellular location is the golgi apparatus membrane. Its pathway is glycan biosynthesis. Glycosyltransferase involved in mannan biosynthesis. This is Protein MANNAN SYNTHESIS-RELATED 1 from Arabidopsis thaliana (Mouse-ear cress).